The chain runs to 361 residues: Peptide chain release factor 1 (361 aa).

Q235 bears the N5-methylglutamine mark. The tract at residues 284–306 is disordered; that stretch reads SQQATAEAMTRKLQVGSGDRSQR.

The protein belongs to the prokaryotic/mitochondrial release factor family. In terms of processing, methylated by PrmC. Methylation increases the termination efficiency of RF1.

The protein resides in the cytoplasm. Peptide chain release factor 1 directs the termination of translation in response to the peptide chain termination codons UAG and UAA. The sequence is that of Peptide chain release factor 1 from Xylella fastidiosa (strain 9a5c).